The following is a 109-amino-acid chain: Large ribosomal subunit protein uL1 (109 aa).

The protein belongs to the universal ribosomal protein uL1 family. In terms of assembly, part of the 50S ribosomal subunit.

Binds directly to 23S rRNA. The L1 stalk is quite mobile in the ribosome, and is involved in E site tRNA release. Functionally, protein L1 is also a translational repressor protein, it controls the translation of the L11 operon by binding to its mRNA. The polypeptide is Large ribosomal subunit protein uL1 (rplA) (Aquifex pyrophilus).